A 171-amino-acid chain; its full sequence is Large ribosomal subunit protein bL21 (171 aa).

The segment at 144 to 171 (AAPAKAEAAPKKKAAPKKAAAKTEEGEA) is disordered. Positions 154-163 (KKKAAPKKAA) are enriched in basic residues.

This sequence belongs to the bacterial ribosomal protein bL21 family. As to quaternary structure, part of the 50S ribosomal subunit. Contacts protein L20.

In terms of biological role, this protein binds to 23S rRNA in the presence of protein L20. This Caulobacter vibrioides (strain ATCC 19089 / CIP 103742 / CB 15) (Caulobacter crescentus) protein is Large ribosomal subunit protein bL21.